A 619-amino-acid chain; its full sequence is ATP-dependent RNA helicase abstrakt (619 aa).

The segment covering methionine 1 to serine 11 has biased composition (basic residues). Disordered regions lie at residues methionine 1–valine 25 and glutamate 50–alanine 69. 7 positions are modified to phosphoserine: serine 11, serine 13, serine 14, serine 56, serine 57, serine 58, and serine 66. Positions arginine 177 to valine 205 match the Q motif motif. The Helicase ATP-binding domain occupies leucine 208 to isoleucine 392. Alanine 221–threonine 228 contacts ATP. The DEAD box signature appears at aspartate 340–aspartate 343. The 161-residue stretch at asparagine 403–alanine 563 folds into the Helicase C-terminal domain. The segment at histidine 577–lysine 594 adopts a CCHC-type zinc-finger fold.

Belongs to the DEAD box helicase family. DDX41 subfamily.

It localises to the nucleus. It catalyses the reaction ATP + H2O = ADP + phosphate + H(+). In terms of biological role, ATP-dependent RNA helicase. Is essential for the directed and fasciculated early outgrowth of the bolwig nerves, as well as for its navigation at later stages. Is required during post-transcriptional gene expression. Plays a role during morphogenetic process, apoptosis and the establishment of cell polarity. The polypeptide is ATP-dependent RNA helicase abstrakt (abs) (Drosophila melanogaster (Fruit fly)).